A 34-amino-acid polypeptide reads, in one-letter code: MNFEVLFQLTALIFVVAAGPLVIVLLASRSNSGL.

Residues valine 5–leucine 25 traverse the membrane as a helical segment.

This sequence belongs to the Psb30/Ycf12 family. In terms of assembly, PSII is composed of 1 copy each of membrane proteins PsbA, PsbB, PsbC, PsbD, PsbE, PsbF, PsbH, PsbI, PsbJ, PsbK, PsbL, PsbM, PsbT, PsbX, PsbY, PsbZ, Psb30/Ycf12, peripheral proteins of the oxygen-evolving complex and a large number of cofactors. It forms dimeric complexes.

It localises to the plastid. Its subcellular location is the chloroplast thylakoid membrane. A core subunit of photosystem II (PSII), probably helps stabilize the reaction center. The sequence is that of Photosystem II reaction center protein Psb30 from Tupiella akineta (Green alga).